Consider the following 553-residue polypeptide: Adenine deaminase (553 aa).

It belongs to the metallo-dependent hydrolases superfamily. Adenine deaminase family. Requires Mn(2+) as cofactor.

It catalyses the reaction adenine + H2O + H(+) = hypoxanthine + NH4(+). In Methanosarcina acetivorans (strain ATCC 35395 / DSM 2834 / JCM 12185 / C2A), this protein is Adenine deaminase.